The sequence spans 320 residues: MAEFRIDPEMELPVLPSRARADVSRKPEWLKINLRTDAEFVELKRLMRGQGLHTVCEEARCPNIFECWNRRTATFMILGDICTRNCGFCAVRSGVPTGLDLAEPERVADACVQLGLRHVVVTSVARDDLSDGGASIFAETIRAIRRKNPFTGVEVLIPDFGGNWDALAVVMDAEPDVLNHNIETVRRLSDRVRSRAKYDRSLELLRRAKEMKPHVSTKSSIMVGLGETMQELYEAMDDLRAAGVDIVTFGQYLRPTARHLAVEKFYTPAEFEHLREEALKRGFAHCESGPLVRSSYHADEQSAQAVARRTGAGRAAQTGD.

7 residues coordinate [4Fe-4S] cluster: cysteine 56, cysteine 61, cysteine 67, cysteine 82, cysteine 86, cysteine 89, and serine 295. Residues 68–284 (WNRRTATFMI…REEALKRGFA (217 aa)) form the Radical SAM core domain. Residues 300–320 (EQSAQAVARRTGAGRAAQTGD) form a disordered region. Over residues 303–320 (AQAVARRTGAGRAAQTGD) the composition is skewed to low complexity.

It belongs to the radical SAM superfamily. Lipoyl synthase family. [4Fe-4S] cluster is required as a cofactor.

It localises to the cytoplasm. The catalysed reaction is [[Fe-S] cluster scaffold protein carrying a second [4Fe-4S](2+) cluster] + N(6)-octanoyl-L-lysyl-[protein] + 2 oxidized [2Fe-2S]-[ferredoxin] + 2 S-adenosyl-L-methionine + 4 H(+) = [[Fe-S] cluster scaffold protein] + N(6)-[(R)-dihydrolipoyl]-L-lysyl-[protein] + 4 Fe(3+) + 2 hydrogen sulfide + 2 5'-deoxyadenosine + 2 L-methionine + 2 reduced [2Fe-2S]-[ferredoxin]. The protein operates within protein modification; protein lipoylation via endogenous pathway; protein N(6)-(lipoyl)lysine from octanoyl-[acyl-carrier-protein]: step 2/2. Catalyzes the radical-mediated insertion of two sulfur atoms into the C-6 and C-8 positions of the octanoyl moiety bound to the lipoyl domains of lipoate-dependent enzymes, thereby converting the octanoylated domains into lipoylated derivatives. In Symbiobacterium thermophilum (strain DSM 24528 / JCM 14929 / IAM 14863 / T), this protein is Lipoyl synthase.